Consider the following 411-residue polypeptide: Dual-specificity RNA methyltransferase RlmN (411 aa).

The active-site Proton acceptor is glutamate 124. A Radical SAM core domain is found at 130-379 (EEGRGTLCIS…IRTPRGRDIL (250 aa)). A disulfide bond links cysteine 137 and cysteine 382. Residues cysteine 144, cysteine 148, and cysteine 151 each contribute to the [4Fe-4S] cluster site. Residues 208-209 (GE), serine 240, 262-264 (SLH), and asparagine 339 each bind S-adenosyl-L-methionine. Residue cysteine 382 is the S-methylcysteine intermediate of the active site.

It belongs to the radical SAM superfamily. RlmN family. The cofactor is [4Fe-4S] cluster.

The protein localises to the cytoplasm. The enzyme catalyses adenosine(2503) in 23S rRNA + 2 reduced [2Fe-2S]-[ferredoxin] + 2 S-adenosyl-L-methionine = 2-methyladenosine(2503) in 23S rRNA + 5'-deoxyadenosine + L-methionine + 2 oxidized [2Fe-2S]-[ferredoxin] + S-adenosyl-L-homocysteine. It carries out the reaction adenosine(37) in tRNA + 2 reduced [2Fe-2S]-[ferredoxin] + 2 S-adenosyl-L-methionine = 2-methyladenosine(37) in tRNA + 5'-deoxyadenosine + L-methionine + 2 oxidized [2Fe-2S]-[ferredoxin] + S-adenosyl-L-homocysteine. Functionally, specifically methylates position 2 of adenine 2503 in 23S rRNA and position 2 of adenine 37 in tRNAs. m2A2503 modification seems to play a crucial role in the proofreading step occurring at the peptidyl transferase center and thus would serve to optimize ribosomal fidelity. The polypeptide is Dual-specificity RNA methyltransferase RlmN (Rhizobium meliloti (strain 1021) (Ensifer meliloti)).